We begin with the raw amino-acid sequence, 356 residues long: Probable butyrate kinase (356 aa).

This sequence belongs to the acetokinase family.

The protein resides in the cytoplasm. It carries out the reaction butanoate + ATP = butanoyl phosphate + ADP. In Coprothermobacter proteolyticus (strain ATCC 35245 / DSM 5265 / OCM 4 / BT), this protein is Probable butyrate kinase.